A 517-amino-acid polypeptide reads, in one-letter code: Cytochrome P450 monooxygenase penP (517 aa).

The helical transmembrane segment at Gly-17 to Pro-37 threads the bilayer. A heme-binding site is contributed by Cys-456. An N-linked (GlcNAc...) asparagine glycan is attached at Asn-501.

The protein belongs to the cytochrome P450 family. The cofactor is heme.

The protein localises to the membrane. It participates in secondary metabolite biosynthesis. Functionally, cytochrome P450 monooxygenase; part of the gene cluster that mediates the biosynthesis of the indole diterpenes penitrems. The geranylgeranyl diphosphate (GGPP) synthase penG catalyzes the first step in penitrem biosynthesis via conversion of farnesyl pyrophosphate and isopentyl pyrophosphate into geranylgeranyl pyrophosphate (GGPP). Condensation of indole-3-glycerol phosphate with GGPP by the prenyl transferase penC then forms 3-geranylgeranylindole (3-GGI). Epoxidation by the FAD-dependent monooxygenase penM leads to a epoxidized-GGI that is substrate of the terpene cyclase penB for cyclization to yield paspaline. Paspaline is subsequently converted to 13-desoxypaxilline by the cytochrome P450 monooxygenase penP, the latter being then converted to paxilline by the cytochrome P450 monooxygenase penQ. Paxilline is converted to beta-paxitriol via C-10 ketoreduction by the short-chain dehydrogenase PC-15 which can be monoprenylated at the C-20 by the indole diterpene prenyltransferase penD. A two-step elimination (acetylation and elimination) process performed by the O-acetyltransferase PC-16 and the P.simplicissimum ptmI-ortholog not yet identified in P.crustosum, leads to the production of the prenylated form of penijanthine. The FAD-linked oxidoreductase ptmO then converts the prenylated form of penijanthine into PC-M5 which is in turn transformed into PC-M4 by the aromatic dimethylallyltransferase PC-22. A series of oxidation steps involving 4 cytochrome P450 monooxygenases (PC-21, PC-05, PC-23, PC-20) and a FAD-dependent monooxygenase (PC-14) are required for the transformation of PC-M4 to penitrems A and E. Synthesis of these final products is proposed to proceed via penitrems D and C (PC-21, PC-05, PC-14) and penitrems B and F (PC-21, PC-05, PC-14, PC-23). The chain is Cytochrome P450 monooxygenase penP from Penicillium crustosum (Blue mold fungus).